Here is a 444-residue protein sequence, read N- to C-terminus: Biotin carboxylase 2 (444 aa).

Residues 1–444 (MFTKVLIANR…VTTDFLKQHL (444 aa)) form the Biotin carboxylation domain. Residues K116, K158, 164–165 (GG), 200–203 (EKVI), H208, and H235 contribute to the ATP site. The region spanning 120–317 (RKAMEAAGVP…LVEQQLRIAA (198 aa)) is the ATP-grasp domain. K237 contacts hydrogencarbonate. Positions 275 and 288 each coordinate ATP. Residues E275, E288, and N290 each coordinate Mg(2+). E275, E288, and N290 together coordinate Mn(2+). The hydrogencarbonate site is built by R292, V295, and R338. Residue R292 is part of the active site. Biotin is bound at residue R338.

In terms of assembly, acetyl-CoA carboxylase is a heterohexamer of biotin carboxyl carrier protein, biotin carboxylase and the two subunits of carboxyl transferase in a 2:2 complex. The cofactor is Mg(2+). Requires Mn(2+) as cofactor.

The catalysed reaction is N(6)-biotinyl-L-lysyl-[protein] + hydrogencarbonate + ATP = N(6)-carboxybiotinyl-L-lysyl-[protein] + ADP + phosphate + H(+). The protein operates within lipid metabolism; malonyl-CoA biosynthesis; malonyl-CoA from acetyl-CoA: step 1/1. This protein is a component of the acetyl coenzyme A carboxylase complex; first, biotin carboxylase catalyzes the carboxylation of the carrier protein and then the transcarboxylase transfers the carboxyl group to form malonyl-CoA. This chain is Biotin carboxylase 2 (accC2), found in Bacillus subtilis (strain 168).